Here is a 108-residue protein sequence, read N- to C-terminus: MDQFECINVADAHQKLQEKEAVLVDIRDPQSFAMGHAVQAFHLTNDTLGAFMRNNDFDTPVMVMCYHGNSSKGAAQYLLQQGYDVVYSIDGGFEAWQRQFPAEVAYGA.

The Rhodanese domain occupies Q17–A105. C65 functions as the Cysteine persulfide intermediate in the catalytic mechanism.

It belongs to the GlpE family.

Its subcellular location is the cytoplasm. The catalysed reaction is thiosulfate + hydrogen cyanide = thiocyanate + sulfite + 2 H(+). It carries out the reaction thiosulfate + [thioredoxin]-dithiol = [thioredoxin]-disulfide + hydrogen sulfide + sulfite + 2 H(+). Transferase that catalyzes the transfer of sulfur from thiosulfate to thiophilic acceptors such as cyanide or dithiols. May function in a CysM-independent thiosulfate assimilation pathway by catalyzing the conversion of thiosulfate to sulfite, which can then be used for L-cysteine biosynthesis. This chain is Thiosulfate sulfurtransferase GlpE, found in Escherichia coli O157:H7.